A 307-amino-acid chain; its full sequence is MTETTKTHVILLACGSFNPITKGHIQMFERARDYLHKTGRFIVIGGIVSPVHDSYGKQGLVSSRHRLIMCQLAVQNSDWIRVDPWECYQDTWQTTCSVLEHHRDLMKRVTGCILSNVNTPSMTPVIGQPRNETSQPIYQNNNAPSKPTAAKILGKVGESLSRICCVRPPVERFTFVDENANLGTVMRYEEIELRILLLCGSDLLESFCIPGLWNEADMEVIVGDFGIVVVPRDAADTDRIMNHSSILRKYKNNIMVVKDDINHPMSVVSSTKSRLALQHGDGHVVDYLSQPVIDYILKSQLYINASG.

NAD(+) is bound by residues S16 and F17. Residue H24 coordinates ATP. NAD(+)-binding residues include W92 and T95. Residues C164 and C165 are each lipidated (S-palmitoyl cysteine). Residues G200, D202, L212, W213, and R232 each coordinate NAD(+). 271-274 serves as a coordination point for ATP; sequence TKSR.

The protein belongs to the eukaryotic NMN adenylyltransferase family. Monomer. Mg(2+) serves as cofactor. Degraded in response to injured neurite. Degradation is caused by polyubiquitination by MYCBP2 after recognition by FBXO45. In terms of processing, palmitoylated; palmitoylation is required for membrane association.

The protein localises to the golgi apparatus membrane. It is found in the cytoplasmic vesicle membrane. The protein resides in the cytoplasm. It localises to the cell projection. Its subcellular location is the axon. The enzyme catalyses beta-nicotinamide D-ribonucleotide + ATP + H(+) = diphosphate + NAD(+). It carries out the reaction nicotinate beta-D-ribonucleotide + ATP + H(+) = deamido-NAD(+) + diphosphate. Its pathway is cofactor biosynthesis; NAD(+) biosynthesis; NAD(+) from nicotinamide D-ribonucleotide: step 1/1. It functions in the pathway cofactor biosynthesis; NAD(+) biosynthesis; deamido-NAD(+) from nicotinate D-ribonucleotide: step 1/1. With respect to regulation, inhibited by P1-(adenosine-5')-P3-(nicotinamide-riboside-5')-triphosphate (Np3AD) and P1-(adenosine-5')-P4-(nicotinamide-riboside-5')-tetraphosphate (Np4AD). Functionally, nicotinamide/nicotinate-nucleotide adenylyltransferase that acts as an axon maintenance factor. Axon survival factor required for the maintenance of healthy axons: acts by delaying Wallerian axon degeneration, an evolutionarily conserved process that drives the loss of damaged axons. Catalyzes the formation of NAD(+) from nicotinamide mononucleotide (NMN) and ATP. Can also use the deamidated form; nicotinic acid mononucleotide (NaMN) as substrate but with a lower efficiency. Cannot use triazofurin monophosphate (TrMP) as substrate. Also catalyzes the reverse reaction, i.e. the pyrophosphorolytic cleavage of NAD(+). For the pyrophosphorolytic activity prefers NAD(+), NADH and NaAD as substrates and degrades nicotinic acid adenine dinucleotide phosphate (NHD) less effectively. Fails to cleave phosphorylated dinucleotides NADP(+), NADPH and NaADP(+). Also acts as an activator of ADP-ribosylation by supporting the catalytic activity of PARP16 and promoting mono-ADP-ribosylation of ribosomes by PARP16. May be involved in the maintenance of axonal integrity. This is Nicotinamide/nicotinic acid mononucleotide adenylyltransferase 2 (NMNAT2) from Bos taurus (Bovine).